The following is a 1214-amino-acid chain: Zinc finger E-box-binding homeobox 2 (1214 aa).

The disordered stretch occupies residues 1-101 (MKQPIMADGP…GVEHPWHNNE (101 aa)). A compositionally biased stretch (basic residues) spans 12–24 (CKRRKQANPRRKN). Residues 57–74 (DQETSPASVPNHESSPHV) are compositionally biased toward polar residues. Over residues 89-98 (REGGVEHPWH) the composition is skewed to basic and acidic residues. The residue at position 142 (Ser142) is a Phosphoserine. 3 consecutive C2H2-type zinc fingers follow at residues 211–234 (LTCPYCDRGYKRLTSLKEHIKYRH), 241–263 (FSCPLCSYTFAYRTQLERHMVTH), and 282–304 (FKCTECGKAFKYKHHLKEHLRIH). The C2H2-type 4; atypical zinc finger occupies 310-334 (YECPNCKKRFSHSGSYSSHISSKKC). Ser356, Ser360, and Ser364 each carry phosphoserine. Lys377 carries the post-translational modification N6-acetyllysine. Residue Lys391 forms a Glycyl lysine isopeptide (Lys-Gly) (interchain with G-Cter in SUMO); alternate linkage. A Glycyl lysine isopeptide (Lys-Gly) (interchain with G-Cter in SUMO2); alternate cross-link involves residue Lys391. Residues 437 to 487 (QHLGVGMEAPLLGFPTMNSNLSEVQKVLQIVDNTVSRQKMDCKAEEISKLK) are SMAD-MH2 binding domain. Residues Lys479 and Lys555 each participate in a glycyl lysine isopeptide (Lys-Gly) (interchain with G-Cter in SUMO2) cross-link. A C2H2-type 5; atypical zinc finger spans residues 581–605 (FSCQFCKESFPGPIPLHQHERYLCK). Residues Lys611 and Lys632 each participate in a glycyl lysine isopeptide (Lys-Gly) (interchain with G-Cter in SUMO2) cross-link. Residues 644-703 (GMTSPINPYKDHMSVLKAYYAMNMEPNSDELLKISIAVGLPQEFVKEWFEQRKVYQYSNS) constitute a DNA-binding region (homeobox; atypical). A Phosphoserine modification is found at Ser647. The span at 702 to 715 (NSRSPSLERSSKPL) shows a compositional bias: low complexity. 3 disordered regions span residues 702-740 (NSRSPSLERSSKPLAPNSNPPTKDSLLPRSPVKPMDSIT), 771-810 (PVEKLDHSRSNTPSPLNLSSTSSKNSHSSSYTPNSFSSEE), and 832-857 (ATKNKTKASSISLDHNSVSSSSENSD). Lys713 is covalently cross-linked (Glycyl lysine isopeptide (Lys-Gly) (interchain with G-Cter in SUMO2)). 2 positions are modified to phosphoserine: Ser731 and Ser780. Low complexity-rich tracts occupy residues 780 to 808 (SNTPSPLNLSSTSSKNSHSSSYTPNSFSS) and 840 to 854 (SSISLDHNSVSSSSE). Thr782 carries the phosphothreonine modification. Ser784 bears the Phosphoserine mark. Residue Lys866 forms a Glycyl lysine isopeptide (Lys-Gly) (interchain with G-Cter in SUMO); alternate linkage. A Glycyl lysine isopeptide (Lys-Gly) (interchain with G-Cter in SUMO2); alternate cross-link involves residue Lys866. 2 C2H2-type zinc fingers span residues 999-1021 (YACDLCDKTFQKSSSLLRHKYEH) and 1027-1049 (HQCQICKKAFKHKHHLIEHSRLH). The C2H2-type 8; atypical zinc finger occupies 1055 to 1076 (YQCDKCGKRFSHSGSYSQHMNH). Residues 1117–1214 (TPQGYSDSEE…HEEDNMEDGM (98 aa)) form a disordered region. Residues Ser1122 and Ser1124 each carry the phosphoserine modification. Residues 1127–1155 (RESMPRDGESEKEHEKEGEDGYGKLGRQD) show a composition bias toward basic and acidic residues. Residues 1156–1167 (GDEEFEEEEEES) are compositionally biased toward acidic residues. Basic and acidic residues-rich tracts occupy residues 1168 to 1179 (ENKSMDTDPETI) and 1186 to 1205 (GDHSMDDSSEDGKMETKSDH). Residue Ser1203 is modified to Phosphoserine.

Belongs to the delta-EF1/ZFH-1 C2H2-type zinc-finger family. Binds activated SMAD1, activated SMAD2 and activated SMAD3; binding with SMAD4 is not detected. Interacts with CBX4 and CTBP1. Post-translationally, sumoylation on Lys-391 and Lys-866 is promoted by the E3 SUMO-protein ligase CBX4, and impairs interaction with CTBP1 and transcription repression activity.

The protein localises to the nucleus. The protein resides in the chromosome. In terms of biological role, transcriptional inhibitor that binds to DNA sequence 5'-CACCT-3' in different promoters. Represses transcription of E-cadherin. Represses expression of MEOX2. The sequence is that of Zinc finger E-box-binding homeobox 2 from Homo sapiens (Human).